The following is a 464-amino-acid chain: ATP synthase subunit beta (464 aa).

Gly154–Thr161 provides a ligand contact to ATP.

It belongs to the ATPase alpha/beta chains family. F-type ATPases have 2 components, CF(1) - the catalytic core - and CF(0) - the membrane proton channel. CF(1) has five subunits: alpha(3), beta(3), gamma(1), delta(1), epsilon(1). CF(0) has three main subunits: a(1), b(2) and c(9-12). The alpha and beta chains form an alternating ring which encloses part of the gamma chain. CF(1) is attached to CF(0) by a central stalk formed by the gamma and epsilon chains, while a peripheral stalk is formed by the delta and b chains.

Its subcellular location is the cell membrane. It catalyses the reaction ATP + H2O + 4 H(+)(in) = ADP + phosphate + 5 H(+)(out). Its function is as follows. Produces ATP from ADP in the presence of a proton gradient across the membrane. The catalytic sites are hosted primarily by the beta subunits. This chain is ATP synthase subunit beta, found in Mycoplasmopsis synoviae (strain 53) (Mycoplasma synoviae).